The primary structure comprises 215 residues: MNNTYPHPIIAREGWPYLGGIFIVTLIVHAAAGLGWAWPFWLLTVFVLQFFRDPARTVPTQANAILSPADGRIVAVEQVRDPYADRDALKISVFMNVFNVHSNRAPVDGTVQQVQYFPGKFVNADLDKASLENERNAVVLRRADGQVVTSVQVAGLIARRILCYTKVGETLARGQRYGFIRFGSRVDVYLPLTARPRVTIGEKVSATLTVLAELD.

Serine 184 (schiff-base intermediate with substrate; via pyruvic acid) is an active-site residue. Serine 184 carries the post-translational modification Pyruvic acid (Ser); by autocatalysis.

The protein belongs to the phosphatidylserine decarboxylase family. PSD-A subfamily. As to quaternary structure, heterodimer of a large membrane-associated beta subunit and a small pyruvoyl-containing alpha subunit. Requires pyruvate as cofactor. In terms of processing, is synthesized initially as an inactive proenzyme. Formation of the active enzyme involves a self-maturation process in which the active site pyruvoyl group is generated from an internal serine residue via an autocatalytic post-translational modification. Two non-identical subunits are generated from the proenzyme in this reaction, and the pyruvate is formed at the N-terminus of the alpha chain, which is derived from the carboxyl end of the proenzyme. The post-translation cleavage follows an unusual pathway, termed non-hydrolytic serinolysis, in which the side chain hydroxyl group of the serine supplies its oxygen atom to form the C-terminus of the beta chain, while the remainder of the serine residue undergoes an oxidative deamination to produce ammonia and the pyruvoyl prosthetic group on the alpha chain.

The protein localises to the cell membrane. It catalyses the reaction a 1,2-diacyl-sn-glycero-3-phospho-L-serine + H(+) = a 1,2-diacyl-sn-glycero-3-phosphoethanolamine + CO2. Its pathway is phospholipid metabolism; phosphatidylethanolamine biosynthesis; phosphatidylethanolamine from CDP-diacylglycerol: step 2/2. Its function is as follows. Catalyzes the formation of phosphatidylethanolamine (PtdEtn) from phosphatidylserine (PtdSer). This chain is Phosphatidylserine decarboxylase proenzyme, found in Ralstonia nicotianae (strain ATCC BAA-1114 / GMI1000) (Ralstonia solanacearum).